Reading from the N-terminus, the 122-residue chain is MAPQKDRKPKRSTWRFNLDLTHPVEDGIFDSGNFEQFLREKVKVNGKTGNLGNVVHIERFKNKITVVSEKQFSKRYLKYLTKKYLKKNNLRDWLRVVASDKETYELRYFQISQDEDESESED.

3 positions are modified to phosphoserine: Ser-112, Ser-118, and Ser-120.

Belongs to the eukaryotic ribosomal protein eL22 family.

The protein is Ribosomal protein eL22-like (RPL22L1) of Homo sapiens (Human).